A 567-amino-acid chain; its full sequence is Phenylalanine--tRNA ligase beta subunit (567 aa).

The 76-residue stretch at 284-359 folds into the B5 domain; sequence FAVRTKHVSH…RAYDFNDLTP (76 aa). Positions 337, 343, 346, and 347 each coordinate Mg(2+).

This sequence belongs to the phenylalanyl-tRNA synthetase beta subunit family. Type 2 subfamily. In terms of assembly, tetramer of two alpha and two beta subunits. The cofactor is Mg(2+).

It localises to the cytoplasm. It carries out the reaction tRNA(Phe) + L-phenylalanine + ATP = L-phenylalanyl-tRNA(Phe) + AMP + diphosphate + H(+). This chain is Phenylalanine--tRNA ligase beta subunit, found in Halobacterium salinarum (strain ATCC 29341 / DSM 671 / R1).